Consider the following 363-residue polypeptide: S-adenosylmethionine:tRNA ribosyltransferase-isomerase (363 aa).

Belongs to the QueA family. In terms of assembly, monomer.

Its subcellular location is the cytoplasm. It carries out the reaction 7-aminomethyl-7-carbaguanosine(34) in tRNA + S-adenosyl-L-methionine = epoxyqueuosine(34) in tRNA + adenine + L-methionine + 2 H(+). Its pathway is tRNA modification; tRNA-queuosine biosynthesis. Transfers and isomerizes the ribose moiety from AdoMet to the 7-aminomethyl group of 7-deazaguanine (preQ1-tRNA) to give epoxyqueuosine (oQ-tRNA). The chain is S-adenosylmethionine:tRNA ribosyltransferase-isomerase from Pasteurella multocida (strain Pm70).